A 629-amino-acid polypeptide reads, in one-letter code: Phosphatidylinositol-3,5-bisphosphate 3-phosphatase MTMR8 (629 aa).

A Myotubularin phosphatase domain is found at Gly-126–Tyr-500. Positions 250, 275, and 276 each coordinate a 1,2-diacyl-sn-glycero-3-phospho-(1D-myo-inositol-3,5-bisphosphate). Residues Asn-250, Asn-275, and Ile-276 each coordinate a 1,2-diacyl-sn-glycero-3-phospho-(1D-myo-inositol-3-phosphate). The active-site Phosphocysteine intermediate is Cys-338. Positions 339, 340, 341, 342, 343, 344, 380, and 384 each coordinate a 1,2-diacyl-sn-glycero-3-phospho-(1D-myo-inositol-3,5-bisphosphate). A 1,2-diacyl-sn-glycero-3-phospho-(1D-myo-inositol-3-phosphate) contacts are provided by Ser-339, Asp-340, Gly-341, Trp-342, Asp-343, and Arg-344. Residues Ser-339 and Asp-340 each coordinate phosphate. Residues Trp-342, Asp-343, and Arg-344 each contribute to the phosphate site. An a 1,2-diacyl-sn-glycero-3-phospho-(1D-myo-inositol-3-phosphate)-binding site is contributed by Arg-384. A coiled-coil region spans residues Leu-517–Gly-543.

Belongs to the protein-tyrosine phosphatase family. Non-receptor class myotubularin subfamily. In terms of assembly, homodimer.

It is found in the nucleus envelope. It catalyses the reaction a 1,2-diacyl-sn-glycero-3-phospho-(1D-myo-inositol-3,5-bisphosphate) + H2O = a 1,2-diacyl-sn-glycero-3-phospho-(1D-myo-inositol-5-phosphate) + phosphate. The catalysed reaction is a 1,2-diacyl-sn-glycero-3-phospho-(1D-myo-inositol-3-phosphate) + H2O = a 1,2-diacyl-sn-glycero-3-phospho-(1D-myo-inositol) + phosphate. The enzyme catalyses 1,2-dioctanoyl-sn-glycero-3-phospho-(1D-myo-inositol-3,5-bisphosphate) + H2O = 1,2-dioctanoyl-sn-glycero-3-phospho-(1D-myo-inositol-5-phosphate) + phosphate. In terms of biological role, lipid phosphatase that specifically dephosphorylates the D-3 position of phosphatidylinositol 3-phosphate and phosphatidylinositol 3,5-bisphosphate, generating phosphatidylinositol and phosphatidylinositol 5-phosphate. This Gallus gallus (Chicken) protein is Phosphatidylinositol-3,5-bisphosphate 3-phosphatase MTMR8.